A 576-amino-acid chain; its full sequence is Proline--tRNA ligase (576 aa).

It belongs to the class-II aminoacyl-tRNA synthetase family. ProS type 1 subfamily. Homodimer.

It is found in the cytoplasm. It carries out the reaction tRNA(Pro) + L-proline + ATP = L-prolyl-tRNA(Pro) + AMP + diphosphate. Catalyzes the attachment of proline to tRNA(Pro) in a two-step reaction: proline is first activated by ATP to form Pro-AMP and then transferred to the acceptor end of tRNA(Pro). As ProRS can inadvertently accommodate and process non-cognate amino acids such as alanine and cysteine, to avoid such errors it has two additional distinct editing activities against alanine. One activity is designated as 'pretransfer' editing and involves the tRNA(Pro)-independent hydrolysis of activated Ala-AMP. The other activity is designated 'posttransfer' editing and involves deacylation of mischarged Ala-tRNA(Pro). The misacylated Cys-tRNA(Pro) is not edited by ProRS. The chain is Proline--tRNA ligase from Psychrobacter sp. (strain PRwf-1).